The sequence spans 210 residues: Superoxide dismutase [Mn], mitochondrial (210 aa).

The Mn(2+) site is built by His30, His78, Asp166, and His170.

Belongs to the iron/manganese superoxide dismutase family. As to quaternary structure, homotetramer. The cofactor is Mn(2+). The N-terminus is blocked.

Its subcellular location is the mitochondrion matrix. It carries out the reaction 2 superoxide + 2 H(+) = H2O2 + O2. Destroys superoxide anion radicals which are normally produced within the cells and which are toxic to biological systems. The sequence is that of Superoxide dismutase [Mn], mitochondrial (SOD) from Penicillium chrysogenum (Penicillium notatum).